The chain runs to 194 residues: RNA pyrophosphohydrolase (194 aa).

One can recognise a Nudix hydrolase domain in the interval 6 to 149; the sequence is GFRPNVGIIL…KRDVYQRALQ (144 aa). The Nudix box motif lies at 38–59; the sequence is GGIKFGETPEQAMYRELEEEVG. The segment at 158 to 194 is disordered; the sequence is PTQHVPPQHNTARYLRQTHASRKPDEPSTEKTKPDNE. A compositionally biased stretch (basic and acidic residues) spans 179–194; that stretch reads RKPDEPSTEKTKPDNE.

This sequence belongs to the Nudix hydrolase family. RppH subfamily. Requires a divalent metal cation as cofactor.

Accelerates the degradation of transcripts by removing pyrophosphate from the 5'-end of triphosphorylated RNA, leading to a more labile monophosphorylated state that can stimulate subsequent ribonuclease cleavage. This is RNA pyrophosphohydrolase from Janthinobacterium sp. (strain Marseille) (Minibacterium massiliensis).